The following is a 187-amino-acid chain: Insulin-like growth factor 2 (187 aa).

Residues 1–23 (MCAARQILLLLLAFLAYALDSAA) form the signal peptide. Residues 25–51 (YGTAETLCGGELVDTLQFVCGDRGFYF) form a b region. 3 disulfides stabilise this stretch: Cys-32–Cys-71, Cys-44–Cys-84, and Cys-70–Cys-75. The tract at residues 52–64 (SRPVGRNNRRINR) is c. An a region spans residues 64 to 85 (RGIVEECCFRSCDLALLETYCA). Residues 86-91 (KSVKSE) are d. A propeptide spans 92 to 187 (RDLSATSLAG…ASPEATGPQE (96 aa)) (e peptide). Residues 162–187 (HRPLISLPSQRPPAPRASPEATGPQE) are disordered.

This sequence belongs to the insulin family.

The protein localises to the secreted. The insulin-like growth factors, isolated from plasma, are structurally and functionally related to insulin but have a much higher growth-promoting activity. Acts as a ligand for integrin which is required for IGF2 signaling. This chain is Insulin-like growth factor 2, found in Gallus gallus (Chicken).